Consider the following 603-residue polypeptide: Nuclear receptor subfamily 2 group C member 1 (603 aa).

Residues 1 to 178 are required for interaction with KAT2B; that stretch reads MATIEEIAHQ…RLQRCIAFGM (178 aa). A DNA-binding region (nuclear receptor) is located at residues 110 to 185; it reads FDLCVVCGDK…FGMKQDSVQC (76 aa). 2 NR C4-type zinc fingers span residues 113-133 and 149-173; these read CVVC…CEGC and CRGS…LQRC. A phosphoserine mark is found at serine 197 and serine 215. Threonine 220 is modified (phosphothreonine). Phosphothreonine; by MAPK1 is present on threonine 222. Lysine 250 participates in a covalent cross-link: Glycyl lysine isopeptide (Lys-Gly) (interchain with G-Cter in SUMO2). Residues 348-590 enclose the NR LBD domain; sequence GSVHLITGDS…SVIPHILKME (243 aa). A Phosphoserine; by PKC modification is found at serine 581. The tract at residues 584–603 is required for interaction with NRIP1; that stretch reads PHILKMEPADYNSQIIGHSI. Lysine 588 participates in a covalent cross-link: Glycyl lysine isopeptide (Lys-Gly) (interchain with G-Cter in SUMO2).

It belongs to the nuclear hormone receptor family. NR2 subfamily. As to quaternary structure, homodimer. Heterodimer; binds DNA as a heterodimer with NR2C2 required for chromatin remodeling and for binding to promoter regions such as globin DR1 repeats. Interacts with NRIP1 (via its LXXLL motifs); the interaction provides corepressor activity. Interacts with HDAC3 (via the DNA-binding domain). Interacts with HDAC4 (via the DNA-binding domain). Interacts with PIAS1; the interaction is required for sumoylation of NR2C1. Interacts with UBE2I; the interaction is required for sumoylation of NR2C1. Interacts with KAT2B; the interaction acts as a corepressor of gene expression. Interacts with ESR1; the interaction prevents homodimerization of ESR1 and suppresses its transcriptional activity and cell growth. In terms of processing, sumoylation requires both PIAS1 and UBE2I. Sumoylation appears to dissociate NR2C1 from the PML nuclear bodies. Enhances the interaction with NRIP1 but inhibits interaction with KAT2B. In proliferating cells, stimulation by all-trans retinoic acid, activation of MAPK1-mediated phosphorylation and recruitment to PML bodies with subsequent sumoylation, suppresses OCT4 expression. Phosphorylated on several serine and threonine residues. Phosphorylation on Thr-222, stimulated by all-trans retinoic acid (atRA) mediates PML location and sumoylation in proliferating cells which then modulates its association with effector molecules, KAT2B and NRIP1. Phosphorylation on Ser-581 by PKC is important for protein stability and function as activator of RARB.

The protein localises to the nucleus. It localises to the PML body. Orphan nuclear receptor. Binds the IR7 element in the promoter of its own gene in an autoregulatory negative feedback mechanism. Primarily repressor of a broad range of genes. Binds to hormone response elements (HREs) consisting of two 5'-AGGTCA-3' half site direct repeat consensus sequences. Together with NR2C2, forms the core of the DRED (direct repeat erythroid-definitive) complex that represses embryonic and fetal globin transcription. Also activator of OCT4 gene expression. May be involved in stem cell proliferation and differentiation. Mediator of retinoic acid-regulated preadipocyte proliferation. This is Nuclear receptor subfamily 2 group C member 1 (NR2C1) from Homo sapiens (Human).